Reading from the N-terminus, the 400-residue chain is MAKAKFERTKPHVNIGTIGHVDHGKTTTTAAITLVLSKVGKASFKKYDEIDAAPEERERGITINTAHVEYETDNRHYAHVDCPGHADYIKNMITGAAQMDGAILVVSAADGPMPQTREHILLARQVGVPYIVVWLNKADMVDDPELMELVEMEVRELLSSYEFPGDDIPIVAGSGLKALECGCGKRECEWCGKIWALMDEVDKYIPTPERATDKPFLMPVEDVFTITGRGTVATGRVERGTIKVGEEVEIVGLAESTRKTVVTGVEMFRKLLDFAQAGDNIGTLLRGVERKDIERGQVLAKPGSIKPHTKFTAEVYVLSKEEGGRHTPFFNGYRPQFYFRTTDVTGFIELPEGVEMCMPGDNIKMTIELGKTIAIEEGLRFAIREGGRTVGAGVVTGIIE.

Residues 10–209 (KPHVNIGTIG…EVDKYIPTPE (200 aa)) enclose the tr-type G domain. Residues 19–26 (GHVDHGKT) are G1. GTP is bound at residue 19-26 (GHVDHGKT). Threonine 26 contacts Mg(2+). Positions 60-64 (GITIN) are G2. The segment at 81-84 (DCPG) is G3. GTP-binding positions include 81-85 (DCPGH) and 136-139 (NKAD). Residues 136–139 (NKAD) are G4. Positions 174 to 176 (SGL) are G5.

Belongs to the TRAFAC class translation factor GTPase superfamily. Classic translation factor GTPase family. EF-Tu/EF-1A subfamily. As to quaternary structure, monomer.

Its subcellular location is the cytoplasm. The enzyme catalyses GTP + H2O = GDP + phosphate + H(+). Functionally, GTP hydrolase that promotes the GTP-dependent binding of aminoacyl-tRNA to the A-site of ribosomes during protein biosynthesis. The sequence is that of Elongation factor Tu from Heliobacterium modesticaldum (strain ATCC 51547 / Ice1).